The following is a 1037-amino-acid chain: Tyrosine-protein kinase-like otk (1037 aa).

The first 23 residues, 1–23, serve as a signal peptide directing secretion; the sequence is MDMDVMMISMCILASTFMAPGWA. 5 consecutive Ig-like C2-type domains span residues 24-109, 110-199, 251-365, 368-464, and 469-559; these read STSG…REAS, PPAK…RVMS, PEDL…APLN, PGLL…VSIN, and PKFS…VQLV. The Extracellular portion of the chain corresponds to 24-582; sequence STSGFLRVPQ…GGDGFLVTRA (559 aa). 5 disulfide bridges follow: Cys-47–Cys-96, Cys-138–Cys-188, Cys-276–Cys-354, Cys-399–Cys-448, and Cys-491–Cys-543. 6 N-linked (GlcNAc...) asparagine glycosylation sites follow: Asn-336, Asn-418, Asn-430, Asn-445, Asn-513, and Asn-525. The helical transmembrane segment at 583–603 threads the bilayer; that stretch reads VLITMTVALAYIVLVVGLMLW. The Cytoplasmic segment spans residues 604-1037; the sequence is CRYRRQARKA…SKAMQSVAEK (434 aa). Disordered stretches follow at residues 623–683 and 720–777; these read AGGD…KSVY and SAQS…KEEE. The span at 658 to 676 shows a compositional bias: polar residues; the sequence is KSNGDAQKSDDTACSQQSR. Ser-681 bears the Phosphoserine mark. Residues 693-1031 enclose the Protein kinase; inactive domain; it reads LSELLQIGRG…QLGSALSKAM (339 aa). The segment covering 723–734 has biased composition (basic and acidic residues); sequence SDKDADTEKQHS. Positions 739–749 are enriched in gly residues; that stretch reads GSGGSGSGSGS. Residues 768–777 are compositionally biased toward acidic residues; that stretch reads DDIEEIKEEE.

The protein belongs to the protein kinase superfamily. Tyr protein kinase family. Insulin receptor subfamily. In terms of assembly, interacts with plexA; component of a receptor complex that mediates the repulsive signaling in response to Semaphorin ligands.

The protein resides in the cell membrane. Acts as a calcium-dependent, homophilic cell adhesion molecule that regulates neural recognition during the development of the nervous system. Component of the repulsive Plexin signaling response to regulate motor axon guidance at the embryonic stage. Also component of a receptor complex that is required in the adult visual system to innervate the lamina layer; specific targeting of R1-R6 axons. The polypeptide is Tyrosine-protein kinase-like otk (Drosophila pseudoobscura pseudoobscura (Fruit fly)).